The primary structure comprises 152 residues: Xanthine-guanine phosphoribosyltransferase (152 aa).

5-phospho-alpha-D-ribose 1-diphosphate is bound by residues 37-38 (RG), arginine 69, and 88-96 (DDLVDSGDT). Arginine 69 contacts GMP. Position 89 (aspartate 89) interacts with Mg(2+). Residues aspartate 92 and isoleucine 135 each contribute to the guanine site. Aspartate 92 and isoleucine 135 together coordinate xanthine. GMP-binding positions include 92 to 96 (DSGDT) and 134 to 135 (WI).

It belongs to the purine/pyrimidine phosphoribosyltransferase family. XGPT subfamily. Homotetramer. The cofactor is Mg(2+).

The protein localises to the cell inner membrane. The enzyme catalyses GMP + diphosphate = guanine + 5-phospho-alpha-D-ribose 1-diphosphate. It catalyses the reaction XMP + diphosphate = xanthine + 5-phospho-alpha-D-ribose 1-diphosphate. The catalysed reaction is IMP + diphosphate = hypoxanthine + 5-phospho-alpha-D-ribose 1-diphosphate. It participates in purine metabolism; GMP biosynthesis via salvage pathway; GMP from guanine: step 1/1. The protein operates within purine metabolism; XMP biosynthesis via salvage pathway; XMP from xanthine: step 1/1. Purine salvage pathway enzyme that catalyzes the transfer of the ribosyl-5-phosphate group from 5-phospho-alpha-D-ribose 1-diphosphate (PRPP) to the N9 position of the 6-oxopurines guanine and xanthine to form the corresponding ribonucleotides GMP (guanosine 5'-monophosphate) and XMP (xanthosine 5'-monophosphate), with the release of PPi. To a lesser extent, also acts on hypoxanthine. The protein is Xanthine-guanine phosphoribosyltransferase of Aliivibrio fischeri (strain ATCC 700601 / ES114) (Vibrio fischeri).